The sequence spans 472 residues: Argininosuccinate lyase (472 aa).

It belongs to the lyase 1 family. Argininosuccinate lyase subfamily.

It is found in the cytoplasm. The catalysed reaction is 2-(N(omega)-L-arginino)succinate = fumarate + L-arginine. It participates in amino-acid biosynthesis; L-arginine biosynthesis; L-arginine from L-ornithine and carbamoyl phosphate: step 3/3. This chain is Argininosuccinate lyase, found in Rhodococcus jostii (strain RHA1).